We begin with the raw amino-acid sequence, 264 residues long: Neurexophilin-2 (264 aa).

The N-terminal stretch at 1–22 is a signal peptide; the sequence is MRLRPLPLVVVPGLLQLLFCDS. An II region spans residues 23–90; it reads EKVVHATEGL…WDWLANITEV (68 aa). N-linked (GlcNAc...) asparagine glycans are attached at residues Asn86, Asn139, Asn149, and Asn155. Residues 91–169 are III; it reads QEPLARTKRR…LVPPSKVVEF (79 aa). Residues 170–178 are IV (linker domain); it reads EVSPQSTLE. The tract at residues 179–264 is v (Cys-rich); it reads TKESKSFNCR…HSETPYLSSG (86 aa).

Belongs to the neurexophilin family. In terms of processing, may be proteolytically processed at the boundary between the N-terminal non-conserved and the central conserved domain in neuron-like cells. Brain, only in a scattered subpopulation of neurons that probably represent inhibitory interneurons.

The protein localises to the secreted. Its function is as follows. May be signaling molecules that resemble neuropeptides and that act by binding to alpha-neurexins and possibly other receptors. The sequence is that of Neurexophilin-2 (NXPH2) from Bos taurus (Bovine).